Here is a 433-residue protein sequence, read N- to C-terminus: Pyrimidine-nucleoside phosphorylase (433 aa).

81–83 (KHS) is a binding site for phosphate. 2 residues coordinate K(+): Gly88 and Thr90. Phosphate contacts are provided by residues Thr92, 108 to 110 (KMS), and Thr120. The substrate site is built by Arg168 and Lys187. Residues Leu243, Ala246, and Glu255 each contribute to the K(+) site.

Belongs to the thymidine/pyrimidine-nucleoside phosphorylase family. As to quaternary structure, homodimer. K(+) serves as cofactor.

The catalysed reaction is uridine + phosphate = alpha-D-ribose 1-phosphate + uracil. The enzyme catalyses thymidine + phosphate = 2-deoxy-alpha-D-ribose 1-phosphate + thymine. It carries out the reaction 2'-deoxyuridine + phosphate = 2-deoxy-alpha-D-ribose 1-phosphate + uracil. Catalyzes phosphorolysis of the pyrimidine nucleosides uridine, thymidine and 2'-deoxyuridine with the formation of the corresponding pyrimidine base and ribose-1-phosphate. This Bacillus subtilis (strain 168) protein is Pyrimidine-nucleoside phosphorylase.